A 231-amino-acid polypeptide reads, in one-letter code: Sec-independent protein translocase protein TatB (231 aa).

Residues 1-21 form a helical membrane-spanning segment; it reads MFDIGFSELLLFGVIALIVLG. Positions 77-168 are disordered; sequence MRREMAEMRG…SLKTDFNDNA (92 aa). Basic and acidic residues predominate over residues 101 to 111; sequence ASRDLVDDAKP. Residues 148–157 are compositionally biased toward polar residues; it reads SEQPSAQGDN.

This sequence belongs to the TatB family. The Tat system comprises two distinct complexes: a TatABC complex, containing multiple copies of TatA, TatB and TatC subunits, and a separate TatA complex, containing only TatA subunits. Substrates initially bind to the TatABC complex, which probably triggers association of the separate TatA complex to form the active translocon.

Its subcellular location is the cell inner membrane. Part of the twin-arginine translocation (Tat) system that transports large folded proteins containing a characteristic twin-arginine motif in their signal peptide across membranes. Together with TatC, TatB is part of a receptor directly interacting with Tat signal peptides. TatB may form an oligomeric binding site that transiently accommodates folded Tat precursor proteins before their translocation. The chain is Sec-independent protein translocase protein TatB from Psychrobacter cryohalolentis (strain ATCC BAA-1226 / DSM 17306 / VKM B-2378 / K5).